The sequence spans 856 residues: Wall-associated receptor kinase 17 (856 aa).

The first 42 residues, 1-42 (MPSRSPACRPRGRNRRSAADAVARPLALALILVSTLPRAAHS), serve as a signal peptide directing secretion. N-linked (GlcNAc...) asparagine glycosylation is found at Asn-171 and Asn-234. An EGF-like 1 domain is found at 297–334 (FEKLCKYGTCVDAPTGAGYLCKCPSGYDGNPYVSDGCQ). Intrachain disulfides connect Cys-301/Cys-306, Cys-319/Cys-333, Cys-339/Cys-353, Cys-347/Cys-362, and Cys-364/Cys-379. The region spanning 335–380 (DINECRNYNSNNCTYQNLCNNTLGGYTCSCPENNIGDGYRTGTGCN) is the EGF-like 2; calcium-binding domain. Residues Asn-346 and Asn-354 are each glycosylated (N-linked (GlcNAc...) asparagine). Asn-380 is a glycosylation site (N-linked (GlcNAc...) asparagine). The helical transmembrane segment at 452-470 (VLGVSLVLMVTTTTAASCY) threads the bilayer. The Protein kinase domain maps to 527–805 (YSESRILGRG…VLQELRRSFT (279 aa)). Residues 533-541 (LGRGGQGTV) and Lys-555 contribute to the ATP site. Residue Asp-652 is the Proton acceptor of the active site. Positions 816–844 (SIQENSEQEEKHLHESRSIPSLQSSEVST) are disordered. Positions 823–832 (QEEKHLHESR) are enriched in basic and acidic residues. Polar residues predominate over residues 833 to 844 (SIPSLQSSEVST).

This sequence belongs to the protein kinase superfamily. Ser/Thr protein kinase family. As to quaternary structure, interacts with WAK17 isoform 2; the interaction is direct. Interacts with LRR5; the interaction is direct. Interacts with WAK17 isoform 1; the interaction is direct. In terms of assembly, (Microbial infection) Interacts with G.zeae CFEM1 (via CFEM domain); the interaction is direct. Interacts with G.zeae CFEMN1; the interaction is direct. Interacts with G.zeae CFEM5; the interaction is direct. It depends on Mn(2+) as a cofactor. Requires Mg(2+) as cofactor.

The protein localises to the cell membrane. It carries out the reaction L-seryl-[protein] + ATP = O-phospho-L-seryl-[protein] + ADP + H(+). The catalysed reaction is L-threonyl-[protein] + ATP = O-phospho-L-threonyl-[protein] + ADP + H(+). Functionally, kinase that contributes to activation of the hypersensitive response, a form of programmed cell death, upon fungal infection. Secreted protein that contributes to activation of the hypersensitive response, a form of programmed cell death, upon fungal infection. May sense the presence of fungal material and relay the signal to WAK17 isoform 1. The polypeptide is Wall-associated receptor kinase 17 (Zea mays (Maize)).